The chain runs to 40 residues: Fibrinolytic protease (40 aa).

The Peptidase S1 domain maps to 1 to 40 (IVGGNEVTPHAYPWQVGLFIDDMYFCGGSISVTLTGWGKP).

It belongs to the peptidase S1 family.

It localises to the secreted. The protein localises to the extracellular space. Serine protease with fibrinolytic activity. This Euphausia superba (Antarctic krill) protein is Fibrinolytic protease.